A 341-amino-acid chain; its full sequence is tRNA N6-adenosine threonylcarbamoyltransferase (341 aa).

Fe cation contacts are provided by histidine 113 and histidine 117. Residues 136–140, aspartate 169, glycine 182, and asparagine 280 each bind substrate; that span reads IISGG. Aspartate 308 is a Fe cation binding site.

This sequence belongs to the KAE1 / TsaD family. Fe(2+) serves as cofactor.

It localises to the cytoplasm. It carries out the reaction L-threonylcarbamoyladenylate + adenosine(37) in tRNA = N(6)-L-threonylcarbamoyladenosine(37) in tRNA + AMP + H(+). Its function is as follows. Required for the formation of a threonylcarbamoyl group on adenosine at position 37 (t(6)A37) in tRNAs that read codons beginning with adenine. Is involved in the transfer of the threonylcarbamoyl moiety of threonylcarbamoyl-AMP (TC-AMP) to the N6 group of A37, together with TsaE and TsaB. TsaD likely plays a direct catalytic role in this reaction. In Anaplasma marginale (strain St. Maries), this protein is tRNA N6-adenosine threonylcarbamoyltransferase.